The following is a 347-amino-acid chain: MENLMTSSTLPPLFADEDGSKESNDLATTGLNHPEVPYSSGATSSTNNPEFVEDLSQGQLLQSESSNAAEGNEQRHEDEQRSKRGGWSKGRKRKKPLRDSNAPKSPLTGYVRFMNERREQLRAKRPEVPFPEITRMLGNEWSKLPPEEKQRYLDEADRDKERYMKELEQYQKTEAYKVFSRKTQDRQKGKSHRQDAARQATHDHEKETEVKERSVFDIPIFTEEFLNHSKAREAELRQLRKSNMEFEERNAALQKHVESMRTAVEKLEVDVIQERSRNTVLQQHLETLRQVLTSSFASMPLPGSGETPTVDTIDSYMNRLHSIILANPQDNENFIATVREVVNRLDR.

2 stretches are compositionally biased toward polar residues: residues 1–10 (MENLMTSSTL) and 40–49 (SGATSSTNNP). Disordered stretches follow at residues 1–113 (MENL…YVRF) and 179–211 (FSRK…TEVK). The segment covering 55–66 (LSQGQLLQSESS) has biased composition (low complexity). The span at 72–82 (NEQRHEDEQRS) shows a compositional bias: basic and acidic residues. Over residues 83–96 (KRGGWSKGRKRKKP) the composition is skewed to basic residues. Positions 103–171 (PKSPLTGYVR…RYMKELEQYQ (69 aa)) form a DNA-binding region, HMG box. Position 105 is a phosphoserine (serine 105). Basic and acidic residues predominate over residues 182–211 (KTQDRQKGKSHRQDAARQATHDHEKETEVK). Residues 229–273 (SKAREAELRQLRKSNMEFEERNAALQKHVESMRTAVEKLEVDVIQ) adopt a coiled-coil conformation.

As to quaternary structure, interacts with DTNB. Ubiquitous.

Its subcellular location is the nucleus. Plays a role in neuronal differentiation as chromatin-associated protein. Acts as inhibitor of HMG20B. Overcomes the repressive effects of the neuronal silencer REST and induces the activation of neuronal-specific genes. Involved in the recruitment of the histone methyltransferase KMT2A/MLL1 and consequent increased methylation of histone H3 lysine 4. The polypeptide is High mobility group protein 20A (HMG20A) (Homo sapiens (Human)).